The sequence spans 564 residues: Tripeptidyl-peptidase 1 (564 aa).

The signal sequence occupies residues 1-19 (MGLQACLLGLFALILSGKC). The propeptide at 20–195 (SYSPEPDQRR…PEPQVTGTVG (176 aa)) is removed in mature form. The cysteines at positions 111 and 122 are disulfide-linked. Positions 199-564 (GVTPSVIRKR…PALPKTLLNP (366 aa)) constitute a Peptidase S53 domain. 2 N-linked (GlcNAc...) asparagine glycosylation sites follow: N210 and N222. Residues E272 and D276 each act as charge relay system in the active site. N-linked (GlcNAc...) asparagine glycans are attached at residues N286, N313, and N443. 2 disulfide bridges follow: C365–C527 and C523–C538. The Charge relay system role is filled by S475. Ca(2+) is bound by residues D518 and V519. Ca(2+)-binding residues include G540, G542, and D544.

Monomer. Interacts with CLN5. Interacts with CLN3. The cofactor is Ca(2+). In terms of processing, activated by autocatalytic proteolytical processing upon acidification. N-glycosylation is required for processing and activity.

It is found in the lysosome. It localises to the melanosome. It catalyses the reaction Release of an N-terminal tripeptide from a polypeptide, but also has endopeptidase activity.. In terms of biological role, lysosomal serine protease with tripeptidyl-peptidase I activity. May act as a non-specific lysosomal peptidase which generates tripeptides from the breakdown products produced by lysosomal proteinases. Requires substrates with an unsubstituted N-terminus. The sequence is that of Tripeptidyl-peptidase 1 (TPP1) from Pongo abelii (Sumatran orangutan).